Consider the following 433-residue polypeptide: Meiotically up-regulated gene 131 protein (433 aa).

A compositionally biased stretch (polar residues) spans 401-412 (LSSQGREISNTL). The segment at 401–433 (LSSQGREISNTLSRKRGAKGSNPFEIENMMPHA) is disordered.

It belongs to the UPF0300 family.

It localises to the golgi apparatus. Has a role in meiosis. The polypeptide is Meiotically up-regulated gene 131 protein (mug131) (Schizosaccharomyces pombe (strain 972 / ATCC 24843) (Fission yeast)).